We begin with the raw amino-acid sequence, 223 residues long: UPF0502 protein Shew185_1758 (223 aa).

The protein belongs to the UPF0502 family.

This Shewanella baltica (strain OS185) protein is UPF0502 protein Shew185_1758.